A 167-amino-acid polypeptide reads, in one-letter code: Ribosome maturation factor RimM (167 aa).

A PRC barrel domain is found at 94 to 165 (ENEFYYSDII…KIIITPMEGL (72 aa)).

Belongs to the RimM family. Binds ribosomal protein uS19.

It is found in the cytoplasm. Its function is as follows. An accessory protein needed during the final step in the assembly of 30S ribosomal subunit, possibly for assembly of the head region. Essential for efficient processing of 16S rRNA. May be needed both before and after RbfA during the maturation of 16S rRNA. It has affinity for free ribosomal 30S subunits but not for 70S ribosomes. The protein is Ribosome maturation factor RimM of Staphylococcus aureus (strain Mu3 / ATCC 700698).